Consider the following 480-residue polypeptide: Dihydrolipoyllysine-residue acetyltransferase component 4 of pyruvate dehydrogenase complex, chloroplastic (480 aa).

The N-terminal 53 residues, methionine 1 to serine 53, are a transit peptide targeting the chloroplast. Residues isoleucine 55–glutamate 133 enclose the Lipoyl-binding domain. Lysine 96 is modified (N6-lipoyllysine). 2 disordered regions span residues lysine 140 to proline 168 and alanine 224 to alanine 245. Residues lysine 142 to valine 156 are compositionally biased toward low complexity. One can recognise a Peripheral subunit-binding (PSBD) domain in the interval valine 187–alanine 224. Residues alanine 234 to valine 243 show a composition bias toward pro residues. Residue histidine 453 is part of the active site.

It belongs to the 2-oxoacid dehydrogenase family. It depends on (R)-lipoate as a cofactor.

The protein localises to the plastid. It is found in the chloroplast stroma. It catalyses the reaction N(6)-[(R)-dihydrolipoyl]-L-lysyl-[protein] + acetyl-CoA = N(6)-[(R)-S(8)-acetyldihydrolipoyl]-L-lysyl-[protein] + CoA. In terms of biological role, the pyruvate dehydrogenase complex catalyzes the overall conversion of pyruvate to acetyl-CoA and CO(2). It contains multiple copies of three enzymatic components: pyruvate dehydrogenase (E1), dihydrolipoamide acetyltransferase (E2) and lipoamide dehydrogenase (E3). In Arabidopsis thaliana (Mouse-ear cress), this protein is Dihydrolipoyllysine-residue acetyltransferase component 4 of pyruvate dehydrogenase complex, chloroplastic (LTA2).